The following is a 674-amino-acid chain: Oxidative stress response two-component system protein SSK1 (674 aa).

Residues 66-75 (SPTTLTTPQN) show a composition bias toward polar residues. Disordered stretches follow at residues 66-115 (SPTT…GTTK), 259-354 (QSSI…SVAT), and 372-497 (ANNN…NDPT). A compositionally biased stretch (basic and acidic residues) spans 90–99 (ETTRKNRPDD). Residues 101-115 (NSITPSNSINSGTTK) show a composition bias toward polar residues. The segment covering 264-276 (NNNNNNSNVNNNN) has biased composition (low complexity). Composition is skewed to polar residues over residues 302–314 (MNRSSFSTNNNPV) and 323–336 (VSPSNLGVSRNSPV). Composition is skewed to low complexity over residues 343–352 (SNPVSSPNSV) and 372–383 (ANNNSNQASQSS). Basic and acidic residues predominate over residues 391–416 (VLSEDGSKSVNDKTEEVVSSKLKPND). Over residues 422–433 (QAKQQEQQTAEQ) the composition is skewed to low complexity. A compositionally biased stretch (polar residues) spans 434 to 444 (SENGFSETSAS). Residues 459–481 (TKSSTTATTTSSNSISNNNNTSS) show a composition bias toward low complexity. The Response regulatory domain occupies 507–653 (SVLVVEDNAI…WLQNKITEWG (147 aa)). 4-aspartylphosphate is present on aspartate 556.

This sequence belongs to the SSK1 family.

Final receptor of the SLN1-YPD1-SSK1 two-component regulatory system, which controls activity of the HOG1 pathway in response to oxidative stress and probably also to the osmolarity of the extracellular environment. Involved in cell wall biosynthesis, hyphal growth, and virulence. Regulates the expression of CHK1, as well as of a subset of genes whose functions are associated with cell wall biosynthesis and adaptation to oxidative stress. Provides at least partial adaptive functions for the survival following encounter with human neutrophils. This chain is Oxidative stress response two-component system protein SSK1 (SSK1), found in Candida albicans (strain SC5314 / ATCC MYA-2876) (Yeast).